A 308-amino-acid chain; its full sequence is Elongation factor Ts (308 aa).

The interval 80 to 83 (TDFV) is involved in Mg(2+) ion dislocation from EF-Tu.

This sequence belongs to the EF-Ts family.

The protein resides in the cytoplasm. Functionally, associates with the EF-Tu.GDP complex and induces the exchange of GDP to GTP. It remains bound to the aminoacyl-tRNA.EF-Tu.GTP complex up to the GTP hydrolysis stage on the ribosome. In Allorhizobium ampelinum (strain ATCC BAA-846 / DSM 112012 / S4) (Agrobacterium vitis (strain S4)), this protein is Elongation factor Ts.